Reading from the N-terminus, the 389-residue chain is Protein P4 (389 aa).

In Rice tungro bacilliform virus (isolate Philippines) (RTBV), this protein is Protein P4.